We begin with the raw amino-acid sequence, 147 residues long: Large ribosomal subunit protein uL15 (147 aa).

Basic and acidic residues predominate over residues 1–15 (MKLHELKPAKGAVKE). Residues 1-47 (MKLHELKPAKGAVKEVKRKGRGRATGNGKTAGRGHNGQNSRSGGGVR) are disordered. Residues 23 to 35 (RATGNGKTAGRGH) are compositionally biased toward gly residues.

The protein belongs to the universal ribosomal protein uL15 family. Part of the 50S ribosomal subunit.

Binds to the 23S rRNA. The protein is Large ribosomal subunit protein uL15 of Alkaliphilus metalliredigens (strain QYMF).